Consider the following 363-residue polypeptide: Phosphoserine aminotransferase (363 aa).

Arg-42 is an L-glutamate binding site. Residues Trp-105, Thr-155, Asp-175, and Gln-198 each contribute to the pyridoxal 5'-phosphate site. At Lys-199 the chain carries N6-(pyridoxal phosphate)lysine. Residue 240 to 241 (NT) participates in pyridoxal 5'-phosphate binding.

Belongs to the class-V pyridoxal-phosphate-dependent aminotransferase family. SerC subfamily. In terms of assembly, homodimer. The cofactor is pyridoxal 5'-phosphate.

It localises to the cytoplasm. The enzyme catalyses O-phospho-L-serine + 2-oxoglutarate = 3-phosphooxypyruvate + L-glutamate. It catalyses the reaction 4-(phosphooxy)-L-threonine + 2-oxoglutarate = (R)-3-hydroxy-2-oxo-4-phosphooxybutanoate + L-glutamate. Its pathway is amino-acid biosynthesis; L-serine biosynthesis; L-serine from 3-phospho-D-glycerate: step 2/3. It functions in the pathway cofactor biosynthesis; pyridoxine 5'-phosphate biosynthesis; pyridoxine 5'-phosphate from D-erythrose 4-phosphate: step 3/5. Its function is as follows. Catalyzes the reversible conversion of 3-phosphohydroxypyruvate to phosphoserine and of 3-hydroxy-2-oxo-4-phosphonooxybutanoate to phosphohydroxythreonine. The polypeptide is Phosphoserine aminotransferase (Herminiimonas arsenicoxydans).